The following is a 357-amino-acid chain: UDP-N-acetylglucosamine--N-acetylmuramyl-(pentapeptide) pyrophosphoryl-undecaprenol N-acetylglucosamine transferase (357 aa).

Residues 10 to 12, Asn124, Ser189, Ile244, and Gln289 contribute to the UDP-N-acetyl-alpha-D-glucosamine site; that span reads TGG.

It belongs to the glycosyltransferase 28 family. MurG subfamily.

It localises to the cell membrane. It catalyses the reaction Mur2Ac(oyl-L-Ala-gamma-D-Glu-L-Lys-D-Ala-D-Ala)-di-trans,octa-cis-undecaprenyl diphosphate + UDP-N-acetyl-alpha-D-glucosamine = beta-D-GlcNAc-(1-&gt;4)-Mur2Ac(oyl-L-Ala-gamma-D-Glu-L-Lys-D-Ala-D-Ala)-di-trans,octa-cis-undecaprenyl diphosphate + UDP + H(+). It participates in cell wall biogenesis; peptidoglycan biosynthesis. Its function is as follows. Cell wall formation. Catalyzes the transfer of a GlcNAc subunit on undecaprenyl-pyrophosphoryl-MurNAc-pentapeptide (lipid intermediate I) to form undecaprenyl-pyrophosphoryl-MurNAc-(pentapeptide)GlcNAc (lipid intermediate II). The chain is UDP-N-acetylglucosamine--N-acetylmuramyl-(pentapeptide) pyrophosphoryl-undecaprenol N-acetylglucosamine transferase from Lactococcus lactis subsp. lactis (strain IL1403) (Streptococcus lactis).